A 441-amino-acid polypeptide reads, in one-letter code: Protein C-ets-1 (441 aa).

An N6-acetyllysine; alternate mark is found at lysine 8 and lysine 15. Glycyl lysine isopeptide (Lys-Gly) (interchain with G-Cter in SUMO2); alternate cross-links involve residues lysine 8 and lysine 15. Phosphothreonine; by MAPK is present on threonine 38. Residues 51 to 136 form the PNT domain; that stretch reads ATFSGFTKEQ…EHLEILQKED (86 aa). The tract at residues 130-243 is activation domain; required for transcription activation; it reads EILQKEDVKP…DNMCMGRTSR (114 aa). Residue lysine 138 forms a Glycyl lysine isopeptide (Lys-Gly) (interchain with G-Cter in SUMO2) linkage. Position 223 is a phosphotyrosine (tyrosine 223). Lysine 227 is covalently cross-linked (Glycyl lysine isopeptide (Lys-Gly) (interchain with G-Cter in SUMO)). Residues serine 251 and serine 254 each carry the phosphoserine modification. Threonine 265 carries the phosphothreonine modification. Phosphoserine occurs at positions 267, 270, 282, and 285. The tract at residues 304 to 312 is helix HI-1; sequence FKDYVRDRA. Residue lysine 305 is modified to N6-acetyllysine. The helix HI-2 stretch occupies residues 323-330; that stretch reads AAALAGYT. The ETS DNA-binding region spans 335–415; sequence IQLWQFLLEL…AGKRYVYRFV (81 aa). A helix H4 region spans residues 418-422; the sequence is LQSLL. The tract at residues 426–432 is helix H5; sequence PEELHAM.

This sequence belongs to the ETS family. As to quaternary structure, binds DNA as a homodimer; homodimerization is required for transcription activation. Interacts with MAF and MAFB. Interacts with PAX5; the interaction alters DNA-binding properties. Interacts with DAXX. Interacts with UBE2I. Interacts with SP100; the interaction is direct and modulates ETS1 transcriptional activity. Post-translationally, sumoylated on Lys-15 and Lys-227, preferentially with SUMO2; which inhibits transcriptional activity. Ubiquitinated; which induces proteasomal degradation. In terms of processing, phosphorylation at Ser-251, Ser-282 and Ser-285 by CaMK2/CaMKII in response to calcium signaling decreases affinity for DNA: an increasing number of phosphoserines causes DNA-binding to become progressively weaker. In terms of tissue distribution, highly expressed within lymphoid cells. Isoforms c-ETS-1A and Ets-1 p27 are both detected in all fetal tissues tested, but vary with tissue type in adult tissues. None is detected in brain or kidney.

The protein localises to the nucleus. The protein resides in the cytoplasm. With respect to regulation, autoinhibited by a module composed of four alpha helices (HI-1, HI-2, H4, and H5) that flank the DNA-binding ETS domain, reducing the affinity for DNA. Phosphorylation by CaMK2/CaMKII in response to calcium signaling decreases affinity for DNA. Functionally, transcription factor. Directly controls the expression of cytokine and chemokine genes in a wide variety of different cellular contexts. May control the differentiation, survival and proliferation of lymphoid cells. May also regulate angiogenesis through regulation of expression of genes controlling endothelial cell migration and invasion. Acts as a dominant-negative for isoform c-ETS-1A. The sequence is that of Protein C-ets-1 (ETS1) from Homo sapiens (Human).